Here is a 331-residue protein sequence, read N- to C-terminus: Type 2 lactosamine alpha-2,3-sialyltransferase (331 aa).

Over 1–4 (MRGY) the chain is Cytoplasmic. Residues 5-25 (LVAIFLSAVFLYYVLHCILWG) form a helical; Signal-anchor for type II membrane protein membrane-spanning segment. Residues 26 to 331 (TNVYWVAPVE…KNLVINLTQD (306 aa)) are Lumenal-facing. N129, N181, N282, N295, N308, and N327 each carry an N-linked (GlcNAc...) asparagine glycan.

The protein belongs to the glycosyltransferase 29 family.

It localises to the golgi apparatus membrane. It catalyses the reaction a neolactoside nLc4Cer(d18:1(4E)) + CMP-N-acetyl-beta-neuraminate = a neolactoside IV(3)-alpha-NeuAc-nLc4Cer(d18:1(4E)) + CMP + H(+). The catalysed reaction is a beta-D-galactosyl-(1-&gt;4)-N-acetyl-beta-D-glucosaminyl derivative + CMP-N-acetyl-beta-neuraminate = an N-acetyl-alpha-neuraminyl-(2-&gt;3)-beta-D-galactosyl-(1-&gt;4)-N-acetyl-beta-D-glucosaminyl derivative + CMP + H(+). The enzyme catalyses a neolactoside nLc6Cer(d18:1(4E)) + CMP-N-acetyl-beta-neuraminate = a neolactoside VI(3)-alpha-NeuNAc-nLc6Cer(d18:1(4E)) + CMP + H(+). In terms of biological role, transfers the sialyl residue from CMP-N-acetyl-beta-neuraminate to the terminal galactose residue on sugar chains of glycoproteins and glycolipids. It's alpha-2,3-sialyltransferase activity is specific toward type II glycan chains (Galbeta1-4GlcNAc) on glycoproteins and glycolipids such as neolactosides nLc4Cer and nLc6Cer, whose sialyl-products serve as precursors for the Lewis X antigen. Critically involved in the synthesis of functional selectin ligands needed for neutrophil recruitment during inflammation and lymphocyte homing to the lymph nodes. The sequence is that of Type 2 lactosamine alpha-2,3-sialyltransferase (ST3GAL6) from Pan troglodytes (Chimpanzee).